We begin with the raw amino-acid sequence, 430 residues long: Glutamate-1-semialdehyde 2,1-aminomutase 2 (430 aa).

Residue Lys269 is modified to N6-(pyridoxal phosphate)lysine.

The protein belongs to the class-III pyridoxal-phosphate-dependent aminotransferase family. HemL subfamily. In terms of assembly, homodimer. The cofactor is pyridoxal 5'-phosphate.

The protein localises to the cytoplasm. It catalyses the reaction (S)-4-amino-5-oxopentanoate = 5-aminolevulinate. It participates in porphyrin-containing compound metabolism; protoporphyrin-IX biosynthesis; 5-aminolevulinate from L-glutamyl-tRNA(Glu): step 2/2. The protein is Glutamate-1-semialdehyde 2,1-aminomutase 2 of Bacillus pumilus (strain SAFR-032).